The primary structure comprises 229 residues: Endonuclease V (229 aa).

Belongs to the endonuclease V family.

It is found in the cytoplasm. It carries out the reaction Endonucleolytic cleavage at apurinic or apyrimidinic sites to products with a 5'-phosphate.. Its function is as follows. DNA repair enzyme involved in the repair of deaminated bases. Selectively cleaves double-stranded DNA at the second phosphodiester bond 3' to a deoxyinosine leaving behind the intact lesion on the nicked DNA. This is Endonuclease V from Methanopyrus kandleri (strain AV19 / DSM 6324 / JCM 9639 / NBRC 100938).